We begin with the raw amino-acid sequence, 180 residues long: MTLKNIIIGFFTQIRSIFMIGANIFSKPETKLYPEEKVYLAPRYRGRIILTRNIDGQERCVACNLCAVVCPVDCISLQKSEKTDGRWYPKFFRINFSRCIFCGLCEEACPTAAIQLMPDFELSDFKRQDLVYEKKDLLISGPGKYPNYDFYNFSGVTLKGKKTGDLEIQARPIDVKDLLP.

2 4Fe-4S ferredoxin-type domains span residues 50–80 (LTRN…LQKS) and 90–119 (KFFR…LMPD). Residues cysteine 60, cysteine 63, cysteine 66, cysteine 70, cysteine 99, cysteine 102, cysteine 105, and cysteine 109 each coordinate [4Fe-4S] cluster.

It belongs to the complex I 23 kDa subunit family. In terms of assembly, NDH-1 is composed of 13 different subunits. Subunits NuoA, H, J, K, L, M, N constitute the membrane sector of the complex. [4Fe-4S] cluster is required as a cofactor.

The protein resides in the cell membrane. It carries out the reaction a quinone + NADH + 5 H(+)(in) = a quinol + NAD(+) + 4 H(+)(out). NDH-1 shuttles electrons from NADH, via FMN and iron-sulfur (Fe-S) centers, to quinones in the respiratory chain. The immediate electron acceptor for the enzyme in this species is believed to be ubiquinone. Couples the redox reaction to proton translocation (for every two electrons transferred, four hydrogen ions are translocated across the cytoplasmic membrane), and thus conserves the redox energy in a proton gradient. The chain is NADH-quinone oxidoreductase subunit I from Buchnera aphidicola subsp. Acyrthosiphon pisum (strain APS) (Acyrthosiphon pisum symbiotic bacterium).